A 425-amino-acid chain; its full sequence is MPPRDSYSYAAPPSAQLHEVDTPQEHDKKELVIGDRAYDVTNFVKRHPGGKIIAYQVGTDATDAYKQFHVRSAKADKMLKSLPSRPVHKGYSPRRADLIADFQEFTKQLEAEGMFEPSLPHVAYRLAEVIAMHVAGAALIWHGYTFAGIAMLGVVQGRCGWLMHEGGHYSLTGNIAFDRAIQVACYGLGCGMSGAWWRNQHNKHHATPQKLQHDVDLDTLPLVAFHERIAAKVKSPAMKAWLSMQAKLFAPVTTLLVALGWQLYLHPRHMLRTKHYDELAMLGIRYGLVGYLAANYGAGYVLACYLLYVQLGAMYIFCNFAVSHTHLPVVEPNEHATWVEYAANHTTNCSPSWWCDWWMSYLNYQIEHHLYPSMPQFRHPKIAPRVKQLFEKHGLHYDVRGYFEAMADTFANLDNVAHAPEKKMQ.

The interval 1 to 25 is disordered; that stretch reads MPPRDSYSYAAPPSAQLHEVDTPQE. One can recognise a Cytochrome b5 heme-binding domain in the interval 18 to 93; the sequence is HEVDTPQEHD…SRPVHKGYSP (76 aa). Heme is bound by residues His-47 and His-69. Residues 134 to 154 traverse the membrane as a helical segment; sequence VAGAALIWHGYTFAGIAMLGV. Residues 164–168 carry the Histidine box-1 motif; the sequence is HEGGH. The helical transmembrane segment at 175–197 threads the bilayer; the sequence is IAFDRAIQVACYGLGCGMSGAWW. The Histidine box-2 motif lies at 201–206; that stretch reads HNKHHA. The next 2 helical transmembrane spans lie at 241-261 and 297-317; these read WLSM…ALGW and GAGY…MYIF. Positions 365–369 match the Histidine box-3 motif; that stretch reads QIEHH.

Belongs to the fatty acid desaturase type 1 family. The cofactor is Fe(2+).

Its subcellular location is the membrane. The enzyme catalyses an (8Z,11Z,14Z)-icosatrienoyl-containing glycerolipid + 2 Fe(II)-[cytochrome b5] + O2 + 2 H(+) = (5Z,8Z,11Z,14Z)-eicosatetraenoyl-containing glycerolipid + 2 Fe(III)-[cytochrome b5] + 2 H2O. The catalysed reaction is an (8Z,11Z,14Z,17Z)-eicosatetraenoyl-containing glycerolipid + 2 Fe(II)-[cytochrome b5] + O2 + 2 H(+) = a (5Z,8Z,11Z,14Z,17Z)-eicosapentaenoyl-containing glycerolipid + 2 Fe(III)-[cytochrome b5] + 2 H2O. Its function is as follows. Fatty acid desaturase that introduces a cis double bond at the 5-position in 20-carbon polyunsaturated fatty acids incorporated in a glycerolipid that contain a Delta(8) double bond. The chain is Acyl-lipid (8-3)-desaturase from Rebecca salina (Marine microalga).